The primary structure comprises 249 residues: Proteasome activator complex subunit 1 (249 aa).

Residues 59-102 (APLDIPVPDPVKEKEKEERKKQQEKEEKEEKKKGDEDDKGPPCG) are disordered. A compositionally biased stretch (basic and acidic residues) spans 68–98 (PVKEKEKEERKKQQEKEEKEEKKKGDEDDKG).

It belongs to the PA28 family. In terms of assembly, heterodimer of PSME1 and PSME2, which forms a hexameric ring. PSME1 can form homoheptamers.

Functionally, implicated in immunoproteasome assembly and required for efficient antigen processing. The PA28 activator complex enhances the generation of class I binding peptides by altering the cleavage pattern of the proteasome. The polypeptide is Proteasome activator complex subunit 1 (Psme1) (Mus musculus (Mouse)).